Reading from the N-terminus, the 354-residue chain is Cysteine proteinase 1 (354 aa).

Residues 1–24 (MARRNPLLFAIVVTILFVVCYGSA) form the signal peptide. A propeptide spans 25-125 (LIAQTPPPVD…HKEDVHVDDS (101 aa)) (activation peptide). 3 cysteine pairs are disulfide-bonded: cysteine 150–cysteine 191, cysteine 184–cysteine 229, and cysteine 282–cysteine 330. Residue cysteine 153 is part of the active site. Asparagine 208 carries an N-linked (GlcNAc...) asparagine glycan. Active-site residues include histidine 289 and asparagine 309.

It belongs to the peptidase C1 family.

The cysteine proteinases have a potential role in host-parasite interaction and virulence. This Leishmania pifanoi protein is Cysteine proteinase 1 (CYS1).